A 123-amino-acid chain; its full sequence is Probable U6 snRNA-associated Sm-like protein LSm4 (123 aa).

A Sm domain is found at 3 to 76 (LPLSLLKTAQ…IKYLRIPETV (74 aa)). Over residues 85–97 (NEVRRQQQREQSR) the composition is skewed to basic and acidic residues. A disordered region spans residues 85–123 (NEVRRQQQREQSRGRGGGRGGRGGHRGGGGNRGGRGGAR). Gly residues predominate over residues 98 to 123 (GRGGGRGGRGGHRGGGGNRGGRGGAR).

The protein belongs to the snRNP Sm proteins family. In terms of assembly, component of the precatalytic spliceosome (spliceosome B complex). Component of the U4/U6-U5 tri-snRNP complex, a building block of the precatalytic spliceosome (spliceosome B complex). LSM2, LSM3, LSM4, LSM5, LSM6, LSM7 and LSM8 form a heptameric, ring-shaped subcomplex (the LSM2-8 complex) that is part of the U4/U6-U5 tri-snRNP complex and the precatalytic spliceosome.

Its subcellular location is the nucleus. In terms of biological role, plays a role in pre-mRNA splicing as component of the U4/U6-U5 tri-snRNP complex that is involved in spliceosome assembly, and as component of the precatalytic spliceosome (spliceosome B complex). The heptameric LSM2-8 complex binds specifically to the 3'-terminal U-tract of U6 snRNA. The chain is Probable U6 snRNA-associated Sm-like protein LSm4 (lsm-4) from Caenorhabditis elegans.